The chain runs to 362 residues: Chorismate synthase (362 aa).

2 residues coordinate NADP(+): arginine 48 and arginine 54. FMN contacts are provided by residues 131 to 133 (RSS), 243 to 244 (NA), glycine 287, 302 to 306 (KPTSS), and arginine 328.

It belongs to the chorismate synthase family. In terms of assembly, homotetramer. It depends on FMNH2 as a cofactor.

It catalyses the reaction 5-O-(1-carboxyvinyl)-3-phosphoshikimate = chorismate + phosphate. Its pathway is metabolic intermediate biosynthesis; chorismate biosynthesis; chorismate from D-erythrose 4-phosphate and phosphoenolpyruvate: step 7/7. In terms of biological role, catalyzes the anti-1,4-elimination of the C-3 phosphate and the C-6 proR hydrogen from 5-enolpyruvylshikimate-3-phosphate (EPSP) to yield chorismate, which is the branch point compound that serves as the starting substrate for the three terminal pathways of aromatic amino acid biosynthesis. This reaction introduces a second double bond into the aromatic ring system. The polypeptide is Chorismate synthase (Rhodopseudomonas palustris (strain ATCC BAA-98 / CGA009)).